A 493-amino-acid polypeptide reads, in one-letter code: Glutamyl-tRNA(Gln) amidotransferase subunit A (493 aa).

Residues Lys-78 and Ser-158 each act as charge relay system in the active site. Ser-182 serves as the catalytic Acyl-ester intermediate.

The protein belongs to the amidase family. GatA subfamily. As to quaternary structure, heterotrimer of A, B and C subunits.

The enzyme catalyses L-glutamyl-tRNA(Gln) + L-glutamine + ATP + H2O = L-glutaminyl-tRNA(Gln) + L-glutamate + ADP + phosphate + H(+). Allows the formation of correctly charged Gln-tRNA(Gln) through the transamidation of misacylated Glu-tRNA(Gln) in organisms which lack glutaminyl-tRNA synthetase. The reaction takes place in the presence of glutamine and ATP through an activated gamma-phospho-Glu-tRNA(Gln). This chain is Glutamyl-tRNA(Gln) amidotransferase subunit A, found in Methylocella silvestris (strain DSM 15510 / CIP 108128 / LMG 27833 / NCIMB 13906 / BL2).